We begin with the raw amino-acid sequence, 335 residues long: N-lysine methyltransferase KMT5A-A (335 aa).

2 disordered regions span residues M1 to K91 and L133 to S183. The segment covering S67 to K91 has biased composition (basic and acidic residues). Over residues V145–N161 the composition is skewed to basic residues. An SET domain is found at E199–G320. S-adenosyl-L-methionine-binding positions include K209–R211, Y254, and N281–H282.

The protein belongs to the class V-like SAM-binding methyltransferase superfamily. Histone-lysine methyltransferase family. PR/SET subfamily.

It is found in the nucleus. The protein resides in the chromosome. The enzyme catalyses L-lysyl(20)-[histone H4] + S-adenosyl-L-methionine = N(6)-methyl-L-lysyl(20)-[histone H4] + S-adenosyl-L-homocysteine + H(+). It carries out the reaction L-lysyl-[protein] + S-adenosyl-L-methionine = N(6)-methyl-L-lysyl-[protein] + S-adenosyl-L-homocysteine + H(+). Its function is as follows. Protein-lysine N-methyltransferase that monomethylates both histones and non-histone proteins. Specifically monomethylates 'Lys-20' of histone H4 (H4K20me1). H4K20me1 is enriched during mitosis and represents a specific tag for epigenetic transcriptional repression. Mainly functions in euchromatin regions, thereby playing a central role in the silencing of euchromatic genes. Required for cell proliferation, probably by contributing to the maintenance of proper higher-order structure of DNA during mitosis. Involved in chromosome condensation and proper cytokinesis. This Xenopus laevis (African clawed frog) protein is N-lysine methyltransferase KMT5A-A.